Here is a 177-residue protein sequence, read N- to C-terminus: Alkyl hydroperoxide reductase AhpD (177 aa).

The Proton donor role is filled by Cys-130. A disulfide bridge links Cys-130 with Cys-133. Catalysis depends on Cys-133, which acts as the Cysteine sulfenic acid (-SOH) intermediate.

This sequence belongs to the AhpD family. As to quaternary structure, homotrimer.

The enzyme catalyses N(6)-[(R)-dihydrolipoyl]-L-lysyl-[lipoyl-carrier protein] + a hydroperoxide = N(6)-[(R)-lipoyl]-L-lysyl-[lipoyl-carrier protein] + an alcohol + H2O. In terms of biological role, antioxidant protein with alkyl hydroperoxidase activity. Required for the reduction of the AhpC active site cysteine residues and for the regeneration of the AhpC enzyme activity. The chain is Alkyl hydroperoxide reductase AhpD from Corynebacterium aurimucosum (strain ATCC 700975 / DSM 44827 / CIP 107346 / CN-1) (Corynebacterium nigricans).